A 182-amino-acid polypeptide reads, in one-letter code: Putative lipoprotein LpqE (182 aa).

An N-terminal signal peptide occupies residues 1-29; it reads MNRCNIRLRLAGMTTWVASIALLAAALSG. Residue cysteine 30 is the site of N-palmitoyl cysteine attachment. The S-diacylglycerol cysteine moiety is linked to residue cysteine 30.

The protein resides in the cell membrane. The sequence is that of Putative lipoprotein LpqE (lpqE) from Mycobacterium bovis (strain ATCC BAA-935 / AF2122/97).